The following is a 388-amino-acid chain: Succinate--CoA ligase [ADP-forming] subunit beta (388 aa).

The ATP-grasp domain maps to 9-245; the sequence is KELLAGYGLP…KSQENERELK (237 aa). Residues Lys-46, 53-55, Glu-100, Tyr-103, and Glu-108 each bind ATP; that span reads GRG. Residues Asn-200 and Asp-214 each contribute to the Mg(2+) site. Substrate-binding positions include Asn-265 and 322-324; that span reads GIV.

This sequence belongs to the succinate/malate CoA ligase beta subunit family. As to quaternary structure, heterotetramer of two alpha and two beta subunits. Mg(2+) is required as a cofactor.

The enzyme catalyses succinate + ATP + CoA = succinyl-CoA + ADP + phosphate. It catalyses the reaction GTP + succinate + CoA = succinyl-CoA + GDP + phosphate. It participates in carbohydrate metabolism; tricarboxylic acid cycle; succinate from succinyl-CoA (ligase route): step 1/1. Succinyl-CoA synthetase functions in the citric acid cycle (TCA), coupling the hydrolysis of succinyl-CoA to the synthesis of either ATP or GTP and thus represents the only step of substrate-level phosphorylation in the TCA. The beta subunit provides nucleotide specificity of the enzyme and binds the substrate succinate, while the binding sites for coenzyme A and phosphate are found in the alpha subunit. In Neisseria meningitidis serogroup C / serotype 2a (strain ATCC 700532 / DSM 15464 / FAM18), this protein is Succinate--CoA ligase [ADP-forming] subunit beta.